A 119-amino-acid polypeptide reads, in one-letter code: uncharacterized protein (119 aa).

The segment at 1–22 (MQGQAGKRKTDGKVPSNTEQNC) is disordered.

This is an uncharacterized protein from Saccharomyces cerevisiae (strain ATCC 204508 / S288c) (Baker's yeast).